A 473-amino-acid chain; its full sequence is Aspartyl/glutamyl-tRNA(Asn/Gln) amidotransferase subunit B (473 aa).

Belongs to the GatB/GatE family. GatB subfamily. Heterotrimer of A, B and C subunits.

The catalysed reaction is L-glutamyl-tRNA(Gln) + L-glutamine + ATP + H2O = L-glutaminyl-tRNA(Gln) + L-glutamate + ADP + phosphate + H(+). It catalyses the reaction L-aspartyl-tRNA(Asn) + L-glutamine + ATP + H2O = L-asparaginyl-tRNA(Asn) + L-glutamate + ADP + phosphate + 2 H(+). In terms of biological role, allows the formation of correctly charged Asn-tRNA(Asn) or Gln-tRNA(Gln) through the transamidation of misacylated Asp-tRNA(Asn) or Glu-tRNA(Gln) in organisms which lack either or both of asparaginyl-tRNA or glutaminyl-tRNA synthetases. The reaction takes place in the presence of glutamine and ATP through an activated phospho-Asp-tRNA(Asn) or phospho-Glu-tRNA(Gln). In Levilactobacillus brevis (strain ATCC 367 / BCRC 12310 / CIP 105137 / JCM 1170 / LMG 11437 / NCIMB 947 / NCTC 947) (Lactobacillus brevis), this protein is Aspartyl/glutamyl-tRNA(Asn/Gln) amidotransferase subunit B.